A 389-amino-acid polypeptide reads, in one-letter code: Major outer membrane porin (389 aa).

A signal peptide spans 1–23; that stretch reads MKKLLKSALLSAAFAGSVGSLQA.

The protein belongs to the chlamydial porin (CP) (TC 1.B.2) family. In terms of assembly, part of a disulfide cross-linked outer membrane complex (COMC) composed of the major outer membrane porin (MOMP), the small cysteine-rich protein (OmcA) and the large cysteine-rich periplasmic protein (OmcB).

The protein localises to the cell outer membrane. Functionally, in elementary bodies (EBs, the infectious stage, which is able to survive outside the host cell) provides the structural integrity of the outer envelope through disulfide cross-links with the small cysteine-rich protein and the large cysteine-rich periplasmic protein. It has been described in publications as the Sarkosyl-insoluble COMC (Chlamydia outer membrane complex), and serves as the functional equivalent of peptidoglycan. In terms of biological role, permits diffusion of specific solutes through the outer membrane. This Chlamydia pneumoniae (Chlamydophila pneumoniae) protein is Major outer membrane porin (ompA).